Here is a 439-residue protein sequence, read N- to C-terminus: tRNA modification GTPase MnmE (439 aa).

Residues R26, E88, and R127 each coordinate (6S)-5-formyl-5,6,7,8-tetrahydrofolate. Positions 220-367 constitute a TrmE-type G domain; that stretch reads GARLALIGRP…LRDAIHTALI (148 aa). A K(+)-binding site is contributed by N230. Residues 230–235, 249–255, and 274–277 each bind GTP; these read NAGKSS, TPIPGTT, and DTAG. S234 serves as a coordination point for Mg(2+). The K(+) site is built by T249, I251, and T254. T255 contributes to the Mg(2+) binding site. (6S)-5-formyl-5,6,7,8-tetrahydrofolate is bound at residue K439.

The protein belongs to the TRAFAC class TrmE-Era-EngA-EngB-Septin-like GTPase superfamily. TrmE GTPase family. Homodimer. Heterotetramer of two MnmE and two MnmG subunits. It depends on K(+) as a cofactor.

It localises to the cytoplasm. Exhibits a very high intrinsic GTPase hydrolysis rate. Involved in the addition of a carboxymethylaminomethyl (cmnm) group at the wobble position (U34) of certain tRNAs, forming tRNA-cmnm(5)s(2)U34. This is tRNA modification GTPase MnmE from Deinococcus geothermalis (strain DSM 11300 / CIP 105573 / AG-3a).